A 199-amino-acid chain; its full sequence is Transcriptional regulatory protein DesR (199 aa).

In terms of domain architecture, Response regulatory spans 3–117; the sequence is SIFIAEDQQM…ELANAIRSVM (115 aa). Position 54 is a 4-aspartylphosphate (Asp-54). One can recognise an HTH luxR-type domain in the interval 131-196; sequence LYSEANPLTD…EAITRSKEKG (66 aa). Residues 155–174 constitute a DNA-binding region (H-T-H motif); it reads TKEIAQELSIKSGTVRNYIS.

Post-translationally, phosphorylated by DesK.

It is found in the cytoplasm. Member of the two-component regulatory system DesR/DesK, responsible for cold induction of the des gene coding for the Delta5 acyl-lipid desaturase. In Bacillus subtilis (strain 168), this protein is Transcriptional regulatory protein DesR (desR).